Here is a 315-residue protein sequence, read N- to C-terminus: Thioredoxin reductase (315 aa).

34–41 (EGQKVGGQ) contributes to the FAD binding site. Cysteines 134 and 137 form a disulfide. 282 to 291 (DIRVKSLRQV) contributes to the FAD binding site.

It belongs to the class-II pyridine nucleotide-disulfide oxidoreductase family. As to quaternary structure, homodimer. It depends on FAD as a cofactor.

The protein localises to the cytoplasm. The catalysed reaction is [thioredoxin]-dithiol + NADP(+) = [thioredoxin]-disulfide + NADPH + H(+). The protein is Thioredoxin reductase (trxB) of Peptoclostridium acidaminophilum (Eubacterium acidaminophilum).